The primary structure comprises 473 residues: Azaphilone pigments biosynthesis cluster protein L (473 aa).

The first 23 residues, 1-23, serve as a signal peptide directing secretion; it reads MAELSIASGIVGLLSLGIQVTQS. 2 ANK repeats span residues 403 to 432 and 436 to 465; these read EYGNALQAASSGGHWKVVQMLLDQGADVNA and RYGNALHAASSRGHKKVVQMLLDHGANVST. The N-linked (GlcNAc...) asparagine glycan is linked to Asn462.

Functionally, part of the gene cluster that mediates the biosynthesis of azaphilone pigments (MonAzPs), a complex mixture of compounds with a common azaphilone skeleton very widely used as food colorants. Seems not to play a direct role in the biosynthesis but might have a regulatorx function. The chain is Azaphilone pigments biosynthesis cluster protein L from Monascus ruber (Mold).